The following is a 156-amino-acid chain: Ribosome maturation factor RimP (156 aa).

It belongs to the RimP family.

The protein localises to the cytoplasm. Required for maturation of 30S ribosomal subunits. This chain is Ribosome maturation factor RimP, found in Bacillus cytotoxicus (strain DSM 22905 / CIP 110041 / 391-98 / NVH 391-98).